The primary structure comprises 565 residues: Mannosyl-oligosaccharide 1,2-alpha-mannosidase (565 aa).

Residues cysteine 320 and cysteine 363 are joined by a disulfide bond. The active-site Proton donor is the glutamate 378. A Ca(2+)-binding site is contributed by threonine 501. 2 stretches are compositionally biased toward basic and acidic residues: residues 526–538 and 550–565; these read NEKAQMRESKVID and KSADQEAKEIIEEIAG. The interval 526–565 is disordered; the sequence is NEKAQMRESKVIDKSNLPEAQPVDKSADQEAKEIIEEIAG.

It belongs to the glycosyl hydrolase 47 family. Requires Ca(2+) as cofactor.

It carries out the reaction N(4)-(alpha-D-Man-(1-&gt;2)-alpha-D-Man-(1-&gt;2)-alpha-D-Man-(1-&gt;3)-[alpha-D-Man-(1-&gt;2)-alpha-D-Man-(1-&gt;3)-[alpha-D-Man-(1-&gt;2)-alpha-D-Man-(1-&gt;6)]-alpha-D-Man-(1-&gt;6)]-beta-D-Man-(1-&gt;4)-beta-D-GlcNAc-(1-&gt;4)-beta-D-GlcNAc)-L-asparaginyl-[protein] (N-glucan mannose isomer 9A1,2,3B1,2,3) + 4 H2O = N(4)-(alpha-D-Man-(1-&gt;3)-[alpha-D-Man-(1-&gt;3)-[alpha-D-Man-(1-&gt;6)]-alpha-D-Man-(1-&gt;6)]-beta-D-Man-(1-&gt;4)-beta-D-GlcNAc-(1-&gt;4)-beta-D-GlcNAc)-L-asparaginyl-[protein] (N-glucan mannose isomer 5A1,2) + 4 beta-D-mannose. It catalyses the reaction N(4)-(alpha-D-Man-(1-&gt;2)-alpha-D-Man-(1-&gt;2)-alpha-D-Man-(1-&gt;3)-[alpha-D-Man-(1-&gt;3)-[alpha-D-Man-(1-&gt;2)-alpha-D-Man-(1-&gt;6)]-alpha-D-Man-(1-&gt;6)]-beta-D-Man-(1-&gt;4)-beta-D-GlcNAc-(1-&gt;4)-beta-D-GlcNAc)-L-asparaginyl-[protein] (N-glucan mannose isomer 8A1,2,3B1,3) + 3 H2O = N(4)-(alpha-D-Man-(1-&gt;3)-[alpha-D-Man-(1-&gt;3)-[alpha-D-Man-(1-&gt;6)]-alpha-D-Man-(1-&gt;6)]-beta-D-Man-(1-&gt;4)-beta-D-GlcNAc-(1-&gt;4)-beta-D-GlcNAc)-L-asparaginyl-[protein] (N-glucan mannose isomer 5A1,2) + 3 beta-D-mannose. It functions in the pathway protein modification; protein glycosylation. Functionally, involved in the maturation of Asn-linked oligosaccharides. Trim a single alpha-1,2-linked mannose residue from Man(9)GlcNAc(2) to produce Man(8)GlcNAc(2). This chain is Mannosyl-oligosaccharide 1,2-alpha-mannosidase (MNS1), found in Candida albicans (Yeast).